The following is a 318-amino-acid chain: Olfactory receptor 5M5 (318 aa).

Residues 1-31 (MLAPKKMVRGNYSMVTEFILLGLTDRPELQP) lie on the Extracellular side of the membrane. Asn11 is a glycosylation site (N-linked (GlcNAc...) asparagine). The helical transmembrane segment at 32–52 (LLFVLFLVIYLITVGGNLGMM) threads the bilayer. Residues 53–60 (VLIRIDSR) lie on the Cytoplasmic side of the membrane. Residues 61-81 (LHTPMYYFLASLSCLDLCYST) form a helical membrane-spanning segment. Topologically, residues 82 to 105 (NVTPKMLVNFLSEKKTISYAACLV) are extracellular. Cysteines 103 and 195 form a disulfide. A helical transmembrane segment spans residues 106–126 (QCYFFIAMVITEYYMLAVMAY). Residues 127–139 (DRYMAICNPLLYS) are Cytoplasmic-facing. Residues 140–160 (SKMSKGVCVRLIAGPYIYGFL) form a helical membrane-spanning segment. Residues 161-202 (SGLMETMWTYRLTFCGSNIINHFYCADPPLIRLSCSDTFIKE) lie on the Extracellular side of the membrane. The helical transmembrane segment at 203-223 (TSMFVVAGFNLSNSLFIILIS) threads the bilayer. Over 224–243 (YLFILIAILRMRSAEGRRKA) the chain is Cytoplasmic. The helical transmembrane segment at 244 to 264 (FSTCGSHLVAVTVFYGTLFCM) threads the bilayer. Topologically, residues 265–277 (YVRPPTDKSVEQS) are extracellular. Residues 278–298 (KIIAVFYTFVSPMLNPIIYSL) form a helical membrane-spanning segment. At 299 to 318 (RNKDVKHAFWKLVRRNVLSK) the chain is on the cytoplasmic side.

The protein belongs to the G-protein coupled receptor 1 family.

The protein resides in the cell membrane. Functionally, potential odorant receptor. This is Olfactory receptor 5M5 from Mus musculus (Mouse).